The primary structure comprises 235 residues: Hydroxyacylglutathione hydrolase (235 aa).

Zn(2+) contacts are provided by His-53, His-55, Asp-57, His-58, His-109, Asp-127, and His-165.

It belongs to the metallo-beta-lactamase superfamily. Glyoxalase II family. As to quaternary structure, monomer. Zn(2+) serves as cofactor.

It catalyses the reaction an S-(2-hydroxyacyl)glutathione + H2O = a 2-hydroxy carboxylate + glutathione + H(+). It participates in secondary metabolite metabolism; methylglyoxal degradation; (R)-lactate from methylglyoxal: step 2/2. Its function is as follows. Thiolesterase that catalyzes the hydrolysis of S-D-lactoyl-glutathione to form glutathione and D-lactic acid. The sequence is that of Hydroxyacylglutathione hydrolase from Actinobacillus pleuropneumoniae serotype 7 (strain AP76).